The chain runs to 56 residues: Ovomucoid (56 aa).

A Kazal-like domain is found at 6–56; the sequence is VDCSEYPKPACTMEQRPLCGSDNKTYGNKCNFCNAVVESNGTLTLSHFGKC. 3 cysteine pairs are disulfide-bonded: Cys8-Cys38, Cys16-Cys35, and Cys24-Cys56. Asn45 carries an N-linked (GlcNAc...) asparagine glycan.

It is found in the secreted. The polypeptide is Ovomucoid (Afropavo congensis (Congo peafowl)).